Consider the following 345-residue polypeptide: NADH-ubiquinone oxidoreductase chain 2 (345 aa).

10 consecutive transmembrane segments (helical) span residues 1 to 21 (MNPIINLILLSSMIAGTILTM), 25 to 45 (HWVSAWLGLELNTLAIIPIIS), 59 to 79 (YFLIQAASSALFLLSGITNAY), 96 to 116 (IMLSVALATKLGLAPIHFWLP), 123 to 143 (PMITALIITTWQKIAPMALLI), 148 to 168 (LIPPTITLIMGLLSTIIGGLG), 191 to 211 (ITITTITPSLALFNLTLYILL), 240 to 260 (TASLFLLSLLSLGGLPPLSGF), 274 to 294 (HLTPLALLMAITALLSLMFYL), and 324 to 344 (SLLSSLILLSLFLLPITPLMI).

Belongs to the complex I subunit 2 family.

Its subcellular location is the mitochondrion inner membrane. It catalyses the reaction a ubiquinone + NADH + 5 H(+)(in) = a ubiquinol + NAD(+) + 4 H(+)(out). In terms of biological role, core subunit of the mitochondrial membrane respiratory chain NADH dehydrogenase (Complex I) that is believed to belong to the minimal assembly required for catalysis. Complex I functions in the transfer of electrons from NADH to the respiratory chain. The immediate electron acceptor for the enzyme is believed to be ubiquinone. The chain is NADH-ubiquinone oxidoreductase chain 2 (MT-ND2) from Varanus timorensis (Timor monitor).